The sequence spans 361 residues: Phospho-N-acetylmuramoyl-pentapeptide-transferase (361 aa).

Transmembrane regions (helical) follow at residues 25 to 45 (RGIL…PAVI), 73 to 93 (TMGG…WGDL), 98 to 118 (VWLV…DDWI), 139 to 159 (IFGL…AAIT), 168 to 188 (IALP…IVGF), 200 to 220 (GLAI…AYAS), 237 to 257 (AGEL…FLWF), 264 to 284 (VFMG…IAVI), 289 to 309 (MVLV…MIQV), and 339 to 359 (VIVR…ATLK).

This sequence belongs to the glycosyltransferase 4 family. MraY subfamily. It depends on Mg(2+) as a cofactor.

Its subcellular location is the cell inner membrane. The enzyme catalyses UDP-N-acetyl-alpha-D-muramoyl-L-alanyl-gamma-D-glutamyl-meso-2,6-diaminopimeloyl-D-alanyl-D-alanine + di-trans,octa-cis-undecaprenyl phosphate = di-trans,octa-cis-undecaprenyl diphospho-N-acetyl-alpha-D-muramoyl-L-alanyl-D-glutamyl-meso-2,6-diaminopimeloyl-D-alanyl-D-alanine + UMP. It participates in cell wall biogenesis; peptidoglycan biosynthesis. Catalyzes the initial step of the lipid cycle reactions in the biosynthesis of the cell wall peptidoglycan: transfers peptidoglycan precursor phospho-MurNAc-pentapeptide from UDP-MurNAc-pentapeptide onto the lipid carrier undecaprenyl phosphate, yielding undecaprenyl-pyrophosphoryl-MurNAc-pentapeptide, known as lipid I. The chain is Phospho-N-acetylmuramoyl-pentapeptide-transferase from Xanthomonas axonopodis pv. citri (strain 306).